Reading from the N-terminus, the 711-residue chain is Polyribonucleotide nucleotidyltransferase (711 aa).

Mg(2+)-binding residues include D490 and D496. The region spanning 557–619 is the KH domain; the sequence is PRIETMTIPK…KCIDDAMRII (63 aa). One can recognise an S1 motif domain in the interval 629 to 699; that stretch reads GEVYVGKVRS…KTGKFKLSHK (71 aa).

This sequence belongs to the polyribonucleotide nucleotidyltransferase family. It depends on Mg(2+) as a cofactor.

Its subcellular location is the cytoplasm. The catalysed reaction is RNA(n+1) + phosphate = RNA(n) + a ribonucleoside 5'-diphosphate. Functionally, involved in mRNA degradation. Catalyzes the phosphorolysis of single-stranded polyribonucleotides processively in the 3'- to 5'-direction. The sequence is that of Polyribonucleotide nucleotidyltransferase from Phocaeicola vulgatus (strain ATCC 8482 / DSM 1447 / JCM 5826 / CCUG 4940 / NBRC 14291 / NCTC 11154) (Bacteroides vulgatus).